A 101-amino-acid chain; its full sequence is Small ribosomal subunit protein uS10 (101 aa).

This sequence belongs to the universal ribosomal protein uS10 family. In terms of assembly, part of the 30S ribosomal subunit.

In terms of biological role, involved in the binding of tRNA to the ribosomes. The polypeptide is Small ribosomal subunit protein uS10 (Brachyspira hyodysenteriae (Treponema hyodysenteriae)).